A 90-amino-acid polypeptide reads, in one-letter code: Small ribosomal subunit protein bS20 (90 aa).

The interval 1–29 is disordered; the sequence is MANTASAEKRNRQAQKRRARNVQVRTGVK.

This sequence belongs to the bacterial ribosomal protein bS20 family.

In terms of biological role, binds directly to 16S ribosomal RNA. This Anaeromyxobacter sp. (strain Fw109-5) protein is Small ribosomal subunit protein bS20.